A 94-amino-acid polypeptide reads, in one-letter code: ESAT-6-like protein EsxL (94 aa).

Belongs to the WXG100 family. ESAT-6 subfamily. In terms of assembly, strongly interacts with EsxK to form a heterodimeric complex under reducing conditions. The complex is regulated by the redox state of EsxL.

Its subcellular location is the secreted. Functionally, induces apoptosis of host cells. Is immunogenic with highly specific seroreactivity towards TB patients' serum. The sequence is that of ESAT-6-like protein EsxL from Mycobacterium tuberculosis (strain ATCC 25618 / H37Rv).